The sequence spans 601 residues: Elongation factor 4 (601 aa).

The tr-type G domain occupies 6–188 (NYIRNFSIVA…AIVRQLPPPH (183 aa)). GTP-binding positions include 18–23 (DHGKST) and 135–138 (NKVD).

Belongs to the TRAFAC class translation factor GTPase superfamily. Classic translation factor GTPase family. LepA subfamily.

The protein localises to the cell inner membrane. It carries out the reaction GTP + H2O = GDP + phosphate + H(+). Its function is as follows. Required for accurate and efficient protein synthesis under certain stress conditions. May act as a fidelity factor of the translation reaction, by catalyzing a one-codon backward translocation of tRNAs on improperly translocated ribosomes. Back-translocation proceeds from a post-translocation (POST) complex to a pre-translocation (PRE) complex, thus giving elongation factor G a second chance to translocate the tRNAs correctly. Binds to ribosomes in a GTP-dependent manner. This chain is Elongation factor 4, found in Bartonella quintana (strain Toulouse) (Rochalimaea quintana).